The following is a 142-amino-acid chain: Dynein light chain Tctex-type protein 2B (142 aa).

This sequence belongs to the dynein light chain Tctex-type family. Light chain of the cytoplasmic dynein complex 2, a multisubunit complex composed at least of eleven different proteins. The cytoplasmic dynein 2 complex consists of two catalytic heavy chains (HCs) and a number of non-catalytic subunits presented by intermediate chains (ICs), light intermediate chains (LICs) and light chains (LCs). Among them, a heavy chain (DYNC2H1), two intermediate chains (DYNC2I2 and DYNC2I1), a light intermediate chain (DYNC2LI1), and a light chain (DYNLT2B) are unique to the dynein-2 complex, but a subset of the light chains are also shared by dynein-1 and dynein-2 complexes. Interacts with DYNC2I1. The dimer DYNLT2B-DYNLT1/DYNLT3 interacts with DYNC2I1; this interaction is crucial for retrograde trafficking of ciliary proteins.

It is found in the dynein axonemal particle. Its function is as follows. Acts as one of several non-catalytic accessory components of the cytoplasmic dynein 2 complex (dynein-2 complex), a motor protein complex that drives the movement of cargos along microtubules within cilia and flagella in concert with the intraflagellar transport (IFT) system. Required for proper retrograde ciliary transport. The protein is Dynein light chain Tctex-type protein 2B of Homo sapiens (Human).